A 205-amino-acid chain; its full sequence is Heme ligase (205 aa).

Positions 48-203 constitute an FAS1 domain; the sequence is KRTIINLIYS…GVVHIVDKPI (156 aa). Residues 154–172 form a required for binding to host hemoglobin region; sequence LRNLLNNDLIVKIEGEFKH. 2 heme binding domain regions span residues 171 to 181 and 191 to 200; these read KHCNHSIYLNG and CHNGVVHIVD.

As to quaternary structure, component of the hemozoin formation complex (HFC) composed of falcipains FP2A and/or FP2B, plasmepsins PMII, PMIII/HAP and PMIV, heme detoxifying protein HDP and falcilysin FLN. The HFC complex is involved in hemoglobin degradation and detoxification of heme in the food vacuole during the asexual blood stage. Interacts with falcipain 2; the interaction is direct and enhances HDP catalytic activity. Interacts with host hemoglobin.

It localises to the vacuole. The protein localises to the host cytoplasm. Its subcellular location is the host cytosol. It catalyses the reaction 2 Fe(III)-heme b = beta-hematin. In terms of biological role, heme detoxifying enzyme that converts heme to crystalline hemozoin (beta-hematin) to protect the organism from the toxic effects of heme. During its development, P.falciparum proteolyzes vast amounts of host hemoglobin, leading to heme release. In Plasmodium falciparum (isolate 3D7), this protein is Heme ligase.